Consider the following 200-residue polypeptide: Dephospho-CoA kinase (200 aa).

The region spanning 3–200 (VIGLTGGIGS…KKYMTLAQGS (198 aa)) is the DPCK domain. Residue 11 to 16 (GSGKTS) coordinates ATP.

This sequence belongs to the CoaE family.

The protein localises to the cytoplasm. The enzyme catalyses 3'-dephospho-CoA + ATP = ADP + CoA + H(+). It functions in the pathway cofactor biosynthesis; coenzyme A biosynthesis; CoA from (R)-pantothenate: step 5/5. Catalyzes the phosphorylation of the 3'-hydroxyl group of dephosphocoenzyme A to form coenzyme A. In Nitrosospira multiformis (strain ATCC 25196 / NCIMB 11849 / C 71), this protein is Dephospho-CoA kinase.